Reading from the N-terminus, the 488-residue chain is GTPase Der (488 aa).

EngA-type G domains are found at residues 3–166 and 201–374; these read PVVA…VSDG and IKLA…QCAT. Residues 9–16, 56–60, 118–121, 207–214, 254–258, and 319–322 contribute to the GTP site; these read GRPNVGKS, DTGGI, NKTD, DTAGV, and NKWD. Positions 375–459 constitute a KH-like domain; it reads KRVSTALLTR…PIRIQFNEGA (85 aa).

It belongs to the TRAFAC class TrmE-Era-EngA-EngB-Septin-like GTPase superfamily. EngA (Der) GTPase family. In terms of assembly, associates with the 50S ribosomal subunit.

Its function is as follows. GTPase that plays an essential role in the late steps of ribosome biogenesis. This is GTPase Der from Sodalis glossinidius (strain morsitans).